The primary structure comprises 467 residues: tRNA-2-methylthio-N(6)-dimethylallyladenosine synthase (467 aa).

Positions 15 to 135 (KKIFVKTYGC…LPEYVARLAN (121 aa)) constitute an MTTase N-terminal domain. Positions 24, 60, 98, 177, 181, and 184 each coordinate [4Fe-4S] cluster. In terms of domain architecture, Radical SAM core spans 163–395 (LARGATAFLT…QALLGEQQLA (233 aa)). The TRAM domain occupies 398–461 (AGCAGRTMPV…RNSLRGRLRE (64 aa)).

It belongs to the methylthiotransferase family. MiaB subfamily. In terms of assembly, monomer. Requires [4Fe-4S] cluster as cofactor.

The protein localises to the cytoplasm. It carries out the reaction N(6)-dimethylallyladenosine(37) in tRNA + (sulfur carrier)-SH + AH2 + 2 S-adenosyl-L-methionine = 2-methylsulfanyl-N(6)-dimethylallyladenosine(37) in tRNA + (sulfur carrier)-H + 5'-deoxyadenosine + L-methionine + A + S-adenosyl-L-homocysteine + 2 H(+). Functionally, catalyzes the methylthiolation of N6-(dimethylallyl)adenosine (i(6)A), leading to the formation of 2-methylthio-N6-(dimethylallyl)adenosine (ms(2)i(6)A) at position 37 in tRNAs that read codons beginning with uridine. In Parvibaculum lavamentivorans (strain DS-1 / DSM 13023 / NCIMB 13966), this protein is tRNA-2-methylthio-N(6)-dimethylallyladenosine synthase.